An 830-amino-acid chain; its full sequence is uncharacterized protein (830 aa).

Disordered stretches follow at residues 1–28, 70–147, and 186–210; these read MGVQ…DSIC, RRAN…GNFA, and AASP…SKSL. The segment covering 10 to 27 has biased composition (polar residues); that stretch reads NSKNWLRQPDQQPIQDSI. Low complexity-rich tracts occupy residues 100-130 and 186-199; these read QKSS…SIQS and AASP…ASTS. Positions 200-210 are enriched in polar residues; sequence ENLTPTSSKSL. 10 helical membrane-spanning segments follow: residues 505–525, 529–549, 551–571, 584–604, 622–642, 659–679, 691–711, 715–735, 740–760, and 802–822; these read WLVA…VYGG, DMLI…YINP, FFLF…FLGR, FCFA…YVVF, MLYA…GSAL, IIAV…LSLL, IQMF…LHFG, ISSA…SHFI, FAVV…AQGG, and IAIG…PFFG.

This sequence belongs to the ThrE exporter (TC 2.A.79) family.

The protein resides in the cell membrane. It localises to the cell tip. This is an uncharacterized protein from Schizosaccharomyces pombe (strain 972 / ATCC 24843) (Fission yeast).